The sequence spans 278 residues: Shikimate dehydrogenase (NADP(+)) (278 aa).

Shikimate is bound by residues 19-21 (SLS) and Thr-66. Lys-70 functions as the Proton acceptor in the catalytic mechanism. Shikimate-binding residues include Asn-91 and Asp-106. Residues 130–134 (GAGGS), 152–157 (NRTVEK), and Leu-222 each bind NADP(+). Tyr-224 lines the shikimate pocket. Gly-245 contacts NADP(+).

This sequence belongs to the shikimate dehydrogenase family. Homodimer.

It carries out the reaction shikimate + NADP(+) = 3-dehydroshikimate + NADPH + H(+). It participates in metabolic intermediate biosynthesis; chorismate biosynthesis; chorismate from D-erythrose 4-phosphate and phosphoenolpyruvate: step 4/7. Its function is as follows. Involved in the biosynthesis of the chorismate, which leads to the biosynthesis of aromatic amino acids. Catalyzes the reversible NADPH linked reduction of 3-dehydroshikimate (DHSA) to yield shikimate (SA). The polypeptide is Shikimate dehydrogenase (NADP(+)) (Methanococcus aeolicus (strain ATCC BAA-1280 / DSM 17508 / OCM 812 / Nankai-3)).